A 120-amino-acid polypeptide reads, in one-letter code: UPF0102 protein NT01CX_2205 (120 aa).

Belongs to the UPF0102 family.

This Clostridium novyi (strain NT) protein is UPF0102 protein NT01CX_2205.